The primary structure comprises 316 residues: Lipoyl synthase (316 aa).

The segment covering methionine 1–aspartate 19 has biased composition (basic and acidic residues). The disordered stretch occupies residues methionine 1 to valine 31. Positions 55, 60, 66, 81, 85, 88, and 295 each coordinate [4Fe-4S] cluster. Residues tryptophan 67–leucine 284 enclose the Radical SAM core domain.

The protein belongs to the radical SAM superfamily. Lipoyl synthase family. [4Fe-4S] cluster serves as cofactor.

The protein localises to the cytoplasm. It catalyses the reaction [[Fe-S] cluster scaffold protein carrying a second [4Fe-4S](2+) cluster] + N(6)-octanoyl-L-lysyl-[protein] + 2 oxidized [2Fe-2S]-[ferredoxin] + 2 S-adenosyl-L-methionine + 4 H(+) = [[Fe-S] cluster scaffold protein] + N(6)-[(R)-dihydrolipoyl]-L-lysyl-[protein] + 4 Fe(3+) + 2 hydrogen sulfide + 2 5'-deoxyadenosine + 2 L-methionine + 2 reduced [2Fe-2S]-[ferredoxin]. The protein operates within protein modification; protein lipoylation via endogenous pathway; protein N(6)-(lipoyl)lysine from octanoyl-[acyl-carrier-protein]: step 2/2. Catalyzes the radical-mediated insertion of two sulfur atoms into the C-6 and C-8 positions of the octanoyl moiety bound to the lipoyl domains of lipoate-dependent enzymes, thereby converting the octanoylated domains into lipoylated derivatives. The chain is Lipoyl synthase from Ruegeria sp. (strain TM1040) (Silicibacter sp.).